A 384-amino-acid polypeptide reads, in one-letter code: MKLGRFLENGREQIRNLLLNASTVSSAPSFSFVSGNESADLDSCASSIVYAYCLQRKQLGRIVVPFFNIPRKELRLRPELSYLLNLASISSDDIVFLDDIVKLPKRIFSNPIYLVDHNSLDRKDLENFNGSIAGIIDHHKDEGGSLHADPRIIEECGSCCTLVCRYFMPVIRSLYDSKVSELHQTATNLAVLALGPILIDTGNLKNEKTTDTDVKIVNDLCSFVPKDWVRDEFFDTLKEKKKSCKGFSFDDLLRRDLKQYFPDGIVVNYASVGKGLDWIKKKRLGWEDELKSFAEVQNSDLVIVGLSLSKNDEFGRQLILYKRTERGAGLADSFLKLSKQNLGLEIIEEKDNGDLSMWNQRNSAASRKKVVPLLMDSVKQVASK.

Residues aspartate 40, aspartate 42, aspartate 116, histidine 138, and aspartate 200 each coordinate Mn(2+).

Belongs to the PPase class C family. It depends on Mn(2+) as a cofactor.

The catalysed reaction is [phosphate](n) + H2O = [phosphate](n-1) + phosphate + H(+). Its function is as follows. Degradation of inorganic polyphosphates. The polypeptide is Putative exopolyphosphatase (Schizosaccharomyces pombe (strain 972 / ATCC 24843) (Fission yeast)).